The following is a 77-amino-acid chain: Conotoxin Vc6.14 (77 aa).

The signal sequence occupies residues 1-19 (MEKLTILLLVAAVLMSTQA). The propeptide occupies 20–37 (MFQGGGEKRPKDKIKFLS). 3 disulfide bridges follow: C51–C65, C58–C69, and C64–C74.

Belongs to the conotoxin O2 superfamily. Expressed by the venom duct.

It is found in the secreted. Its function is as follows. Inhibits voltage-gated ion channels. This chain is Conotoxin Vc6.14, found in Conus victoriae (Queen Victoria cone).